Reading from the N-terminus, the 169-residue chain is Ribosome maturation factor RimM (169 aa).

One can recognise a PRC barrel domain in the interval E91–H167.

This sequence belongs to the RimM family. In terms of assembly, binds ribosomal protein uS19.

The protein resides in the cytoplasm. Functionally, an accessory protein needed during the final step in the assembly of 30S ribosomal subunit, possibly for assembly of the head region. Essential for efficient processing of 16S rRNA. May be needed both before and after RbfA during the maturation of 16S rRNA. It has affinity for free ribosomal 30S subunits but not for 70S ribosomes. The protein is Ribosome maturation factor RimM of Erythrobacter litoralis (strain HTCC2594).